The following is a 97-amino-acid chain: Prophage lipoprotein Bor homolog (97 aa).

The N-terminal stretch at 1–16 (MKKMLLATALALLITG) is a signal peptide. Cys17 carries the N-palmitoyl cysteine lipid modification. Residue Cys17 is the site of S-diacylglycerol cysteine attachment.

This sequence belongs to the lambda phage bor family.

The protein localises to the cell membrane. This is Prophage lipoprotein Bor homolog (borD) from Escherichia coli (strain K12).